Consider the following 237-residue polypeptide: Phosphatidylserine decarboxylase proenzyme (237 aa).

Catalysis depends on serine 206, which acts as the Schiff-base intermediate with substrate; via pyruvic acid. At serine 206 the chain carries Pyruvic acid (Ser); by autocatalysis.

This sequence belongs to the phosphatidylserine decarboxylase family. PSD-A subfamily. Heterodimer of a large membrane-associated beta subunit and a small pyruvoyl-containing alpha subunit. The cofactor is pyruvate. Is synthesized initially as an inactive proenzyme. Formation of the active enzyme involves a self-maturation process in which the active site pyruvoyl group is generated from an internal serine residue via an autocatalytic post-translational modification. Two non-identical subunits are generated from the proenzyme in this reaction, and the pyruvate is formed at the N-terminus of the alpha chain, which is derived from the carboxyl end of the proenzyme. The post-translation cleavage follows an unusual pathway, termed non-hydrolytic serinolysis, in which the side chain hydroxyl group of the serine supplies its oxygen atom to form the C-terminus of the beta chain, while the remainder of the serine residue undergoes an oxidative deamination to produce ammonia and the pyruvoyl prosthetic group on the alpha chain.

Its subcellular location is the cell membrane. It carries out the reaction a 1,2-diacyl-sn-glycero-3-phospho-L-serine + H(+) = a 1,2-diacyl-sn-glycero-3-phosphoethanolamine + CO2. It participates in phospholipid metabolism; phosphatidylethanolamine biosynthesis; phosphatidylethanolamine from CDP-diacylglycerol: step 2/2. Its function is as follows. Catalyzes the formation of phosphatidylethanolamine (PtdEtn) from phosphatidylserine (PtdSer). The polypeptide is Phosphatidylserine decarboxylase proenzyme (Rhodococcus jostii (strain RHA1)).